The chain runs to 827 residues: Periplasmic nitrate reductase (827 aa).

Residues 1–32 (MELNRRDFMKANAAAAAALAAGITLPVKNVYA) constitute a signal peptide (tat-type signal). The 57-residue stretch at 37–93 (IKWDKAPCRFCGTGCSVLVGTQNGRMVASQGDPDAEVNRGLNCIKGYFLPKIIYGKD) folds into the 4Fe-4S Mo/W bis-MGD-type domain. Residues C44, C47, C51, and C79 each coordinate [4Fe-4S] cluster. Residues K81, Q148, N173, C177, 210–217 (WGSNMAEM), 241–245 (STFEH), M371, Q375, N481, 507–508 (SD), K530, D557, and 717–726 (TGRVLEHWHS) each bind Mo-bis(molybdopterin guanine dinucleotide). F793 provides a ligand contact to substrate. The Mo-bis(molybdopterin guanine dinucleotide) site is built by N801 and K818.

This sequence belongs to the prokaryotic molybdopterin-containing oxidoreductase family. NasA/NapA/NarB subfamily. As to quaternary structure, component of the periplasmic nitrate reductase NapAB complex composed of NapA and NapB. It depends on [4Fe-4S] cluster as a cofactor. The cofactor is Mo-bis(molybdopterin guanine dinucleotide). Post-translationally, predicted to be exported by the Tat system. The position of the signal peptide cleavage has not been experimentally proven.

It localises to the periplasm. It carries out the reaction 2 Fe(II)-[cytochrome] + nitrate + 2 H(+) = 2 Fe(III)-[cytochrome] + nitrite + H2O. Functionally, catalytic subunit of the periplasmic nitrate reductase complex NapAB. Receives electrons from NapB and catalyzes the reduction of nitrate to nitrite. The sequence is that of Periplasmic nitrate reductase from Glaesserella parasuis serovar 5 (strain SH0165) (Haemophilus parasuis).